The following is a 91-amino-acid chain: Protein LURE 1.6 (91 aa).

Positions 1–20 (MKLPFIFLITLLIFVSSCTS) are cleaved as a signal peptide. Disulfide bonds link Cys59–Cys76, Cys62–Cys83, and Cys66–Cys85.

It belongs to the DEFL family. Expressed in the pistil. Detected in the synergid cells.

The protein resides in the secreted. Functionally, pollen tube attractants guiding pollen tubes to the ovular micropyle. This chain is Protein LURE 1.6, found in Arabidopsis thaliana (Mouse-ear cress).